Reading from the N-terminus, the 300-residue chain is DDRGK domain-containing protein 1 (300 aa).

Over M1–D2 the chain is Lumenal. Residues V3–I23 traverse the membrane as a helical segment. Residues R24–A300 are Cytoplasmic-facing. Positions Q28–E173 are disordered. Acidic residues predominate over residues N78 to E90. Basic and acidic residues predominate over residues K112 to E173. Residues S183–E197 carry the UFM1-interacting motif (UFIM) motif. Residues V217–P261 form the PCI domain.

It belongs to the DDRGK1 family. In terms of assembly, component of the UFM1 ribosome E3 ligase (UREL) complex, composed of ufl1, ddrgk1 and cdk5rap3.

It is found in the endoplasmic reticulum membrane. In terms of biological role, component of the UFM1 ribosome E3 ligase (UREL) complex, a multiprotein complex that catalyzes ufmylation of endoplasmic reticulum-docked proteins. The UREL complex plays a key role in ribosome recycling by mediating mono-ufmylation of the RPL26/uL24 subunit of the 60S ribosome following ribosome dissociation: ufmylation weakens the junction between post-termination 60S subunits and SEC61 translocons, promoting release and recycling of the large ribosomal subunit from the endoplasmic reticulum membrane. Ufmylation of RPL26/uL24 and subsequent 60S ribosome recycling either take place after normal termination of translation or after ribosome stalling during cotranslational translocation at the endoplasmic reticulum. Within the UREL complex, DDRGK1 tethers the complex to the endoplasmic reticulum membrane to restrict its activity to endoplasmic reticulum-docked ribosomes and acts as an ufmylation 'reader': following RPL26/uL24 ufmylation, DDRGK1 specifically binds to ufmylated RPL26/uL24 via its UFIM motif, resulting in stable association between the 60S ribosome and the UREL complex, followed by dissociation of the 60S ribosome subunit from the endoplasmic reticulum membrane. The UREL complex is also involved in reticulophagy in response to endoplasmic reticulum stress by promoting ufmylation of proteins such as CYB5R3 and RPN1, thereby promoting lysosomal degradation of ufmylated proteins. Plays a role in cartilage development through sox9, inhibiting the ubiquitin-mediated proteasomal degradation of this transcriptional regulator. Required for stabilization and ufmylation of ATG9A. The chain is DDRGK domain-containing protein 1 from Danio rerio (Zebrafish).